Reading from the N-terminus, the 117-residue chain is Ribosome-binding factor A (117 aa).

Belongs to the RbfA family. Monomer. Binds 30S ribosomal subunits, but not 50S ribosomal subunits or 70S ribosomes.

Its subcellular location is the cytoplasm. One of several proteins that assist in the late maturation steps of the functional core of the 30S ribosomal subunit. Associates with free 30S ribosomal subunits (but not with 30S subunits that are part of 70S ribosomes or polysomes). Required for efficient processing of 16S rRNA. May interact with the 5'-terminal helix region of 16S rRNA. In Bacillus licheniformis (strain ATCC 14580 / DSM 13 / JCM 2505 / CCUG 7422 / NBRC 12200 / NCIMB 9375 / NCTC 10341 / NRRL NRS-1264 / Gibson 46), this protein is Ribosome-binding factor A.